The following is a 115-amino-acid chain: NADH-ubiquinone oxidoreductase chain 3 (115 aa).

3 consecutive transmembrane segments (helical) span residues 4 to 24 (LTAL…AFWL), 55 to 75 (FFLV…LLPL), and 87 to 107 (MMLT…YEWM).

Belongs to the complex I subunit 3 family. As to quaternary structure, core subunit of respiratory chain NADH dehydrogenase (Complex I) which is composed of 45 different subunits. Interacts with TMEM186. Interacts with TMEM242.

The protein resides in the mitochondrion inner membrane. It carries out the reaction a ubiquinone + NADH + 5 H(+)(in) = a ubiquinol + NAD(+) + 4 H(+)(out). Functionally, core subunit of the mitochondrial membrane respiratory chain NADH dehydrogenase (Complex I) which catalyzes electron transfer from NADH through the respiratory chain, using ubiquinone as an electron acceptor. Essential for the catalytic activity of complex I. The polypeptide is NADH-ubiquinone oxidoreductase chain 3 (Peromyscus boylii (Brush deermouse)).